Here is an 820-residue protein sequence, read N- to C-terminus: Inhibitor of nuclear factor kappa-B kinase epsilon subunit homolog 1 (820 aa).

Positions Leu21 to Thr299 constitute a Protein kinase domain. Residues Ile27–Val35 and Lys49 contribute to the ATP site. The active-site Proton acceptor is the Asp149. Residues Ser758 to Asn798 form a disordered region.

It belongs to the protein kinase superfamily. Ser/Thr protein kinase family. In terms of assembly, interacts with allo-1 (via N-terminus); the interaction is direct. As to expression, expressed in oocytes.

Its subcellular location is the cytoplasm. It carries out the reaction L-seryl-[protein] + ATP = O-phospho-L-seryl-[protein] + ADP + H(+). The catalysed reaction is L-threonyl-[protein] + ATP = O-phospho-L-threonyl-[protein] + ADP + H(+). Its function is as follows. Serine/threonine-protein kinase, which plays a role in regulating allophagy, an autophagic process in which paternal organelles, including mitochondria and membranous organelles, are degraded in embryos. Phosphorylates the allophagy receptor allo-1, which is required for allophagy. This chain is Inhibitor of nuclear factor kappa-B kinase epsilon subunit homolog 1, found in Caenorhabditis elegans.